We begin with the raw amino-acid sequence, 571 residues long: DDB1- and CUL4-associated factor 11 homolog (571 aa).

The disordered stretch occupies residues 51–75 (RMKPNHSNDSDTDFSSDDEGCPKMT). Positions 60-69 (SDTDFSSDDE) are enriched in acidic residues. 6 WD repeats span residues 162–201 (RVAT…SKYR), 266–305 (RDHC…RIRT), 309–349 (AHED…DGDV), 357–396 (GHRD…NMSG), 435–479 (GHSV…VSRR), and 482–521 (GHTA…EGVI).

Belongs to the WD repeat LEC14B family.

In terms of biological role, involved in regulation of lifespan. Required for dopaminergic CEP neuron degeneration in response to Mn(2+). Inhibits the skn-1-mediated up-regulation of tatn-1. The polypeptide is DDB1- and CUL4-associated factor 11 homolog (Caenorhabditis elegans).